Reading from the N-terminus, the 249-residue chain is Ubiquinone/menaquinone biosynthesis C-methyltransferase UbiE (249 aa).

Residues Thr-72, Asp-93, and Asp-121–Ala-122 each bind S-adenosyl-L-methionine.

It belongs to the class I-like SAM-binding methyltransferase superfamily. MenG/UbiE family.

It catalyses the reaction a 2-demethylmenaquinol + S-adenosyl-L-methionine = a menaquinol + S-adenosyl-L-homocysteine + H(+). The enzyme catalyses a 2-methoxy-6-(all-trans-polyprenyl)benzene-1,4-diol + S-adenosyl-L-methionine = a 5-methoxy-2-methyl-3-(all-trans-polyprenyl)benzene-1,4-diol + S-adenosyl-L-homocysteine + H(+). It functions in the pathway quinol/quinone metabolism; menaquinone biosynthesis; menaquinol from 1,4-dihydroxy-2-naphthoate: step 2/2. Its pathway is cofactor biosynthesis; ubiquinone biosynthesis. Its function is as follows. Methyltransferase required for the conversion of demethylmenaquinol (DMKH2) to menaquinol (MKH2) and the conversion of 2-polyprenyl-6-methoxy-1,4-benzoquinol (DDMQH2) to 2-polyprenyl-3-methyl-6-methoxy-1,4-benzoquinol (DMQH2). The chain is Ubiquinone/menaquinone biosynthesis C-methyltransferase UbiE from Cellvibrio japonicus (strain Ueda107) (Pseudomonas fluorescens subsp. cellulosa).